The chain runs to 370 residues: Phospho-N-acetylmuramoyl-pentapeptide-transferase (370 aa).

The next 10 helical transmembrane spans lie at 29 to 49 (AGLT…SFLL), 70 to 90 (GTPT…TLLW), 93 to 113 (LSNW…GLGF), 133 to 153 (KFIV…YYTG), 177 to 197 (GPVW…LIGS), 209 to 229 (GLAS…AYVS), 251 to 271 (VFLA…CHPA), 273 to 293 (VFMG…VAIM), 298 to 318 (ILLV…ILQV), and 349 to 369 (VIRF…TLKI).

Belongs to the glycosyltransferase 4 family. MraY subfamily. The cofactor is Mg(2+).

The protein localises to the cell inner membrane. It catalyses the reaction UDP-N-acetyl-alpha-D-muramoyl-L-alanyl-gamma-D-glutamyl-meso-2,6-diaminopimeloyl-D-alanyl-D-alanine + di-trans,octa-cis-undecaprenyl phosphate = di-trans,octa-cis-undecaprenyl diphospho-N-acetyl-alpha-D-muramoyl-L-alanyl-D-glutamyl-meso-2,6-diaminopimeloyl-D-alanyl-D-alanine + UMP. Its pathway is cell wall biogenesis; peptidoglycan biosynthesis. In terms of biological role, catalyzes the initial step of the lipid cycle reactions in the biosynthesis of the cell wall peptidoglycan: transfers peptidoglycan precursor phospho-MurNAc-pentapeptide from UDP-MurNAc-pentapeptide onto the lipid carrier undecaprenyl phosphate, yielding undecaprenyl-pyrophosphoryl-MurNAc-pentapeptide, known as lipid I. This is Phospho-N-acetylmuramoyl-pentapeptide-transferase from Leptospira biflexa serovar Patoc (strain Patoc 1 / Ames).